The following is a 223-amino-acid chain: Triosephosphate isomerase (223 aa).

6 to 8 (NLK) lines the substrate pocket. The active-site Electrophile is the H86. E151 functions as the Proton acceptor in the catalytic mechanism. Residues G157 and S187 each contribute to the substrate site.

It belongs to the triosephosphate isomerase family. In terms of assembly, homodimer.

The protein localises to the cytoplasm. The enzyme catalyses D-glyceraldehyde 3-phosphate = dihydroxyacetone phosphate. It participates in carbohydrate biosynthesis; gluconeogenesis. It functions in the pathway carbohydrate degradation; glycolysis; D-glyceraldehyde 3-phosphate from glycerone phosphate: step 1/1. Its function is as follows. Involved in the gluconeogenesis. Catalyzes stereospecifically the conversion of dihydroxyacetone phosphate (DHAP) to D-glyceraldehyde-3-phosphate (G3P). The sequence is that of Triosephosphate isomerase from Campylobacter jejuni subsp. doylei (strain ATCC BAA-1458 / RM4099 / 269.97).